Reading from the N-terminus, the 281-residue chain is tRNA uridine(34) hydroxylase (281 aa).

A Rhodanese domain is found at 125-222 (AREDVKTIDT…YFLKTKNKDG (98 aa)). The active-site Cysteine persulfide intermediate is the Cys182.

It belongs to the TrhO family.

The enzyme catalyses uridine(34) in tRNA + AH2 + O2 = 5-hydroxyuridine(34) in tRNA + A + H2O. Functionally, catalyzes oxygen-dependent 5-hydroxyuridine (ho5U) modification at position 34 in tRNAs. This is tRNA uridine(34) hydroxylase from Neorickettsia sennetsu (strain ATCC VR-367 / Miyayama) (Ehrlichia sennetsu).